The primary structure comprises 435 residues: Serine--tRNA ligase (435 aa).

A disordered region spans residues 41 to 70; it reads QVKTEELQAQRNSRSKSIGQAKAKGDHEEA. The segment covering 49–58 has biased composition (polar residues); sequence AQRNSRSKSI. Position 242–244 (242–244) interacts with L-serine; sequence TAE. 273–275 contributes to the ATP binding site; it reads RSE. Glu-296 is an L-serine binding site. 360 to 363 serves as a coordination point for ATP; sequence EISS. Ser-396 contacts L-serine.

The protein belongs to the class-II aminoacyl-tRNA synthetase family. Type-1 seryl-tRNA synthetase subfamily. Homodimer. The tRNA molecule binds across the dimer.

The protein localises to the cytoplasm. It catalyses the reaction tRNA(Ser) + L-serine + ATP = L-seryl-tRNA(Ser) + AMP + diphosphate + H(+). The enzyme catalyses tRNA(Sec) + L-serine + ATP = L-seryl-tRNA(Sec) + AMP + diphosphate + H(+). The protein operates within aminoacyl-tRNA biosynthesis; selenocysteinyl-tRNA(Sec) biosynthesis; L-seryl-tRNA(Sec) from L-serine and tRNA(Sec): step 1/1. Its function is as follows. Catalyzes the attachment of serine to tRNA(Ser). Is also able to aminoacylate tRNA(Sec) with serine, to form the misacylated tRNA L-seryl-tRNA(Sec), which will be further converted into selenocysteinyl-tRNA(Sec). This chain is Serine--tRNA ligase, found in Aliivibrio fischeri (strain MJ11) (Vibrio fischeri).